The sequence spans 351 residues: Cyanide hydratase (351 aa).

The 280-residue stretch at 6–285 (YKAAAVTSEP…DGLLFVDIDL (280 aa)) folds into the CN hydrolase domain. Residue Glu46 is the Proton acceptor of the active site. The active site involves Lys128. The active-site Nucleophile is the Cys163.

The protein belongs to the carbon-nitrogen hydrolase superfamily. Nitrilase family. Oligomer of dimers, forming left-handed helical fibers with a diameter of 13 nm but with lengths ranging from approximately 1 um at the leading edge of the peak to having approximately the same length and diameter at the trailing edge.

The catalysed reaction is formamide = hydrogen cyanide + H2O. Catalyzes the hydration of cyanide to formamide. Degradation of cyanide may be important for plant pathogenic fungi in infection of cyanogenic plants. The polypeptide is Cyanide hydratase (Neurospora crassa (strain ATCC 24698 / 74-OR23-1A / CBS 708.71 / DSM 1257 / FGSC 987)).